Reading from the N-terminus, the 353-residue chain is Transcription termination/antitermination protein NusG (353 aa).

A KOW domain is found at 301–335 (VGDMVKIISGPFEDFAGVIKEIDPERQELKVNVTI).

It belongs to the NusG family.

With respect to regulation, regulated by autoinhibition via interaction of the N-terminal and the C-terminal domains. Autoinhibition may prevent NusG from interacting prematurely with other components of the transcription complex or non-specific interactions with other cellular components. Its function is as follows. Participates in transcription elongation, termination and antitermination. In Thermotoga maritima (strain ATCC 43589 / DSM 3109 / JCM 10099 / NBRC 100826 / MSB8), this protein is Transcription termination/antitermination protein NusG.